A 361-amino-acid polypeptide reads, in one-letter code: Probable galacturonosyltransferase-like 5 (361 aa).

The Cytoplasmic segment spans residues 1–6; sequence MHWITR. Residues 7-27 form a helical; Signal-anchor for type II membrane protein membrane-spanning segment; that stretch reads FSAFFSAALAMILLSPSLQSF. At 28–361 the chain is on the lumenal side; the sequence is SPAAAIRSSH…APYDLYKHSH (334 aa). N218 and N234 each carry an N-linked (GlcNAc...) asparagine glycan.

Belongs to the glycosyltransferase 8 family.

It localises to the golgi apparatus membrane. The protein operates within glycan metabolism; pectin biosynthesis. May be involved in pectin and/or xylans biosynthesis in cell walls. The sequence is that of Probable galacturonosyltransferase-like 5 (GATL5) from Arabidopsis thaliana (Mouse-ear cress).